Consider the following 886-residue polypeptide: Inter-alpha-trypsin inhibitor heavy chain H3 (886 aa).

A signal peptide spans 1–18 (MWWPYLVLALLSGLEASG). A propeptide spanning residues 19 to 30 (FPRSPLRLLGKR) is cleaved from the precursor. Positions 26–155 (LLGKRSLPEG…KVTFELTYEE (130 aa)) constitute a VIT domain. Asn-88 carries an N-linked (GlcNAc...) asparagine glycan. The VWFA domain occupies 279–439 (PKNIVFVIDI…YNFLETMALE (161 aa)). Asn-577 carries an N-linked (GlcNAc...) asparagine glycan. Asp-646 is subject to Aspartate 1-(chondroitin 4-sulfate)-ester. Residues 647-886 (PHFIIQVPGK…HTDYIVPSLF (240 aa)) constitute a propeptide that is removed on maturation.

It belongs to the ITIH family. In terms of assembly, I-alpha-I plasma protease inhibitors are assembled from one or two heavy chains (HC) and one light chain, bikunin. Pre-alpha-inhibitor (P-alpha-I) is composed of ITIH3/HC3 and bikunin. Post-translationally, heavy chains are linked to bikunin via chondroitin 4-sulfate esterified to the alpha-carboxyl of the C-terminal aspartate after propeptide cleavage.

It is found in the secreted. May act as a carrier of hyaluronan in serum or as a binding protein between hyaluronan and other matrix protein, including those on cell surfaces in tissues to regulate the localization, synthesis and degradation of hyaluronan which are essential to cells undergoing biological processes. The chain is Inter-alpha-trypsin inhibitor heavy chain H3 (ITIH3) from Mesocricetus auratus (Golden hamster).